An 805-amino-acid polypeptide reads, in one-letter code: Transmembrane channel-like protein 6 (805 aa).

A disordered region spans residues 1–29; the sequence is MAQPLAFILDVPETPGDQGQGPSPYDESE. The Lumenal portion of the chain corresponds to 1–209; it reads MAQPLAFILD…SCCGRLRYAC (209 aa). Phosphothreonine is present on Thr-89. Residue Arg-94 is modified to Omega-N-methylarginine. N-linked (GlcNAc...) asparagine glycosylation is present at Asn-103. Thr-105 bears the Phosphothreonine mark. The helical transmembrane segment at 210 to 230 threads the bilayer; sequence VLALHSLGLALLSALQALMPW. The Cytoplasmic portion of the chain corresponds to 231 to 249; it reads RYALKRIGGQFGSSVLSYF. Residues 250-270 traverse the membrane as a helical segment; it reads LFLKTLLAFNALLLLLLVAFI. Over 271-338 the chain is Lumenal; it reads MGPQVAFPPA…TPRVGGLPYN (68 aa). Asn-312 carries an N-linked (GlcNAc...) asparagine glycan. A helical membrane pass occupies residues 339 to 359; that stretch reads MPLAYLSTVGVSFFITCITLV. The Cytoplasmic segment spans residues 360-431; sequence YSMAHSFGES…RSVCGRLRQA (72 aa). Residues 432–452 form a helical membrane-spanning segment; it reads AVLGLVWLLCLGTALGCAVAV. Over 453-469 the chain is Lumenal; sequence HVFSEFMIQSPEAAGQE. The chain crosses the membrane as a helical span at residues 470 to 490; it reads AVLLVLPLVVGLLNLGAPYLC. The Cytoplasmic portion of the chain corresponds to 491-505; sequence RVLAALEPHDSPVLE. A helical transmembrane segment spans residues 506 to 526; the sequence is VYVAICRNLILKLAILGTLCY. At 527–553 the chain is on the lumenal side; sequence HWLGRRVGVLQGQCWEDFVGQELYRFL. The chain crosses the membrane as a helical span at residues 554-574; that stretch reads VMDFVLMLLDTLFGELVWRII. The Cytoplasmic portion of the chain corresponds to 575–604; that stretch reads SEKKLKRRRKPEFDIARNVLELIYGQTLTW. Residues 605–625 traverse the membrane as a helical segment; the sequence is LGVLFSPLLPAVQIIKLLLVF. Over 626–650 the chain is Lumenal; that stretch reads YVKKTSLLANCQAPRRPWLASHMST. A helical transmembrane segment spans residues 651–671; it reads VFLTLLCFPAFLGAAVFLCYA. Residues 672 to 722 are Cytoplasmic-facing; the sequence is VWQVKPSSTCGPFRTLDTMYEAGRVWVRHLEAAGPRVSWLPWVHRYLMENT. The chain crosses the membrane as a helical span at residues 723 to 743; it reads FFVFLVSALLLAVIYLNIQVV. Residues 744–805 are Lumenal-facing; it reads RGQRKVICLL…PALLTDEQDA (62 aa). Residues 778–805 form a disordered region; that stretch reads KEREERSRVGTTEEAAAPPALLTDEQDA.

Belongs to the TMC family. As to quaternary structure, interacts with TMC8. Interacts and forms a complex with TMC8 and CIB1; the interaction stabilizes each component of the complex. Interacts and forms a complex with TMC8 and SLC30A1/ZNT1; the interaction regulates zinc transport into the ER. In terms of assembly, (Microbial infection) Interacts with human papillomavirus 16/HPV16 protein E5; the interaction alleviates TMC6-mediated transcription factors inhibition. In terms of tissue distribution, expressed in placenta, prostate, testis, activated T-lymphocytes and lymphokine-activated killer (LAK) lymphocytes.

The protein localises to the endoplasmic reticulum membrane. The protein resides in the golgi apparatus membrane. Its subcellular location is the nucleus membrane. Functionally, acts as a regulatory protein involved in the regulation of numerous cellular processes. Together with its homolog TMC8/EVER2, forms a complex with CIB1 in lymphocytes and keratynocytes where TMC6 and TMC8 stabilize CIB1 and reciprocally. Together with TMC8, also forms a complex with and activates zinc transporter ZNT1 at the ER membrane of keratynocytes, thereby facilitating zinc uptake into the ER. Down-regulates the activity of transcription factors induced by zinc and cytokines. Also plays a role in thermal sensation by inhibiting the M-channel (KCNQ2-KCNQ3 channel) current in primary sensory neurons. This chain is Transmembrane channel-like protein 6, found in Homo sapiens (Human).